A 375-amino-acid chain; its full sequence is Lipid-A-disaccharide synthase (375 aa).

This sequence belongs to the LpxB family.

It carries out the reaction a lipid X + a UDP-2-N,3-O-bis[(3R)-3-hydroxyacyl]-alpha-D-glucosamine = a lipid A disaccharide + UDP + H(+). Its pathway is bacterial outer membrane biogenesis; LPS lipid A biosynthesis. In terms of biological role, condensation of UDP-2,3-diacylglucosamine and 2,3-diacylglucosamine-1-phosphate to form lipid A disaccharide, a precursor of lipid A, a phosphorylated glycolipid that anchors the lipopolysaccharide to the outer membrane of the cell. The protein is Lipid-A-disaccharide synthase of Pseudomonas putida (strain GB-1).